Reading from the N-terminus, the 269-residue chain is Putative phosphoenolpyruvate synthase regulatory protein (269 aa).

149–156 (GVSRSGKT) contributes to the ADP binding site.

The protein belongs to the pyruvate, phosphate/water dikinase regulatory protein family. PSRP subfamily.

It catalyses the reaction [pyruvate, water dikinase] + ADP = [pyruvate, water dikinase]-phosphate + AMP + H(+). The catalysed reaction is [pyruvate, water dikinase]-phosphate + phosphate + H(+) = [pyruvate, water dikinase] + diphosphate. Bifunctional serine/threonine kinase and phosphorylase involved in the regulation of the phosphoenolpyruvate synthase (PEPS) by catalyzing its phosphorylation/dephosphorylation. In Colwellia psychrerythraea (strain 34H / ATCC BAA-681) (Vibrio psychroerythus), this protein is Putative phosphoenolpyruvate synthase regulatory protein.